A 500-amino-acid chain; its full sequence is MGQSLHALLRDVGLELPAGLADPQLTSITSDSRLVGEGSLFLGLPGERFDGGRFWRQALEAGAAAAVIGPSAAQELPPAADQPVLVLREPVARSIGELAASYWGHPCRRMALIGVTGTNGKTTTTHLIEHLAVRVGQPTALFGTLVNRWPGYSITATHTTSVADRLQAQLAEAASAGSQLAAMEVSSHALVQERVAGCRFAGAVFTNLTQDHLDYHGTMESYYEAKARLFTAPLLDGDGPSAVVNGDDPWGSRLAEQLGGRCWRSSLGDPQAELQMVDLEMTGQGVRGRLLSPAGSGAFCSPLLGRFNLMNLLQAVGVLLQRGLPLAPLLEAVGSFRGVPGRMERVVVNGAESAALPTVLVDYAHTPDGLENALAASRPFTDGRLVCVFGCGGDRDRGKRPQMAAIAARLADRVVVTSDNPRTEDPDQIIADVVAGMPSGTDLSVERDRATAIAEAIADASAADLVLIAGKGHEDYQILGTEKVHFDDREEAEQALRQRQ.

Ser-32 contacts UDP-N-acetyl-alpha-D-muramoyl-L-alanyl-D-glutamate. Position 117 to 123 (117 to 123 (GTNGKTT)) interacts with ATP. Residues 159 to 160 (TT), Ser-186, Gln-192, and Arg-194 each bind UDP-N-acetyl-alpha-D-muramoyl-L-alanyl-D-glutamate. Lys-226 bears the N6-carboxylysine mark. Meso-2,6-diaminopimelate contacts are provided by residues Arg-395, 419–422 (DNPR), Gly-470, and Glu-474. Residues 419 to 422 (DNPR) carry the Meso-diaminopimelate recognition motif motif.

Belongs to the MurCDEF family. MurE subfamily. Requires Mg(2+) as cofactor. Carboxylation is probably crucial for Mg(2+) binding and, consequently, for the gamma-phosphate positioning of ATP.

It is found in the cytoplasm. It carries out the reaction UDP-N-acetyl-alpha-D-muramoyl-L-alanyl-D-glutamate + meso-2,6-diaminopimelate + ATP = UDP-N-acetyl-alpha-D-muramoyl-L-alanyl-gamma-D-glutamyl-meso-2,6-diaminopimelate + ADP + phosphate + H(+). It participates in cell wall biogenesis; peptidoglycan biosynthesis. In terms of biological role, catalyzes the addition of meso-diaminopimelic acid to the nucleotide precursor UDP-N-acetylmuramoyl-L-alanyl-D-glutamate (UMAG) in the biosynthesis of bacterial cell-wall peptidoglycan. This is UDP-N-acetylmuramoyl-L-alanyl-D-glutamate--2,6-diaminopimelate ligase from Parasynechococcus marenigrum (strain WH8102).